The primary structure comprises 444 residues: NAD-capped RNA hydrolase NUDT12 (444 aa).

2 ANK repeats span residues 11–40 and 60–80; these read EIISQFHYSAAEGDIAKLTAILSHSPSLLN and SRQTALDIAKFWGYKHIANLL. N6-succinyllysine is present on lysine 167. 2 residues coordinate Zn(2+): cysteine 266 and cysteine 269. Position 274 is an N6-succinyllysine (lysine 274). Residues cysteine 284 and cysteine 289 each contribute to the Zn(2+) site. Residues tyrosine 300, 336 to 338, glutamate 352, glutamate 356, and glutamate 397 each bind substrate; that span reads AGF. The Nudix hydrolase domain maps to 301-435; that stretch reads PRVDPVVIMQ…SRAIAHQLIK (135 aa). Mg(2+) contacts are provided by alanine 336, glutamate 352, glutamate 356, and glutamate 397. A Nudix box motif is present at residues 337–358; the sequence is GFIEPGETIEDAVRREVEEESG. A Microbody targeting signal motif is present at residues 442 to 444; sequence PNL.

This sequence belongs to the Nudix hydrolase family. NudC subfamily. Homodimer. Homodimerization is essential for its catalytic activity and protein stability. Interacts (via ANK repeats) with BLMH. Requires Mg(2+) as cofactor. Zn(2+) is required as a cofactor.

Its subcellular location is the cytoplasm. The protein resides in the peroxisome. It localises to the cytoplasmic granule. It catalyses the reaction a 5'-end NAD(+)-phospho-ribonucleoside in mRNA + H2O = a 5'-end phospho-adenosine-phospho-ribonucleoside in mRNA + beta-nicotinamide D-ribonucleotide + 2 H(+). It carries out the reaction NAD(+) + H2O = beta-nicotinamide D-ribonucleotide + AMP + 2 H(+). The enzyme catalyses NADH + H2O = reduced beta-nicotinamide D-ribonucleotide + AMP + 2 H(+). The catalysed reaction is NADPH + H2O = reduced beta-nicotinamide D-ribonucleotide + adenosine 2',5'-bisphosphate + 2 H(+). In terms of biological role, mRNA decapping enzyme that specifically removes the nicotinamide adenine dinucleotide (NAD) cap from a subset of mRNAs by hydrolyzing the diphosphate linkage to produce nicotinamide mononucleotide (NMN) and 5' monophosphate mRNA. The NAD-cap is present at the 5'-end of some RNAs; in contrast to the canonical N7 methylguanosine (m7G) cap, the NAD cap promotes mRNA decay. Preferentially acts on NAD-capped transcripts in response to nutrient stress. Also acts on free nicotinamide adenine dinucleotide molecules: hydrolyzes NAD(H) into NMN(H) and AMP, and NADPH into NMNH and 2',5'-ADP. May act to regulate the concentration of peroxisomal nicotinamide nucleotide cofactors required for oxidative metabolism in this organelle. Regulates the levels of circadian clock components PER1, PER2, PER3 and CRY2 in the liver. This Bos taurus (Bovine) protein is NAD-capped RNA hydrolase NUDT12.